The primary structure comprises 2410 residues: Dual specificity protein kinase splA (2410 aa).

Disordered regions lie at residues 29–48 (NNNN…NNNN), 66–103 (NHPS…GELT), 116–158 (NTQT…SNGG), 187–252 (NISP…SSGI), 508–647 (QQLQ…VPSA), and 659–820 (SSSS…KKEG). 2 stretches are compositionally biased toward low complexity: residues 116–128 (NTQT…TSPN) and 137–158 (NTTT…SNGG). Positions 514–525 (QPPPTIQPPPQQ) are enriched in pro residues. Over residues 530–544 (LRGNRSSGNLSGLNS) the composition is skewed to low complexity. The segment covering 545 to 554 (FSLKQSTDSL) has biased composition (polar residues). Residues 560-583 (SQQSTVSSNSTPIAATPISPLTAP) are compositionally biased toward low complexity. Pro residues predominate over residues 584–594 (TSPPPPPPPPT). Low complexity-rich tracts occupy residues 595–618 (NFNS…NTTV), 627–639 (VLPK…SPRP), 659–686 (SSSS…LNIS), 701–738 (SPSY…SPSV), 746–759 (ISPN…PNIS), and 777–813 (NTNN…NNTN). 2 B30.2/SPRY domains span residues 822–1004 (SSWF…GPFS) and 1020–1209 (DSGG…PPFK). Disordered regions lie at residues 1228–1428 (PNGN…NNIY) and 1493–1512 (SLGV…PRKI). Low complexity-rich tracts occupy residues 1229-1359 (NGNN…NNNI), 1373-1399 (SSTG…NNSS), 1419-1428 (SSTNNNNNIY), and 1493-1507 (SLGV…SPKT). The region spanning 1481–1703 (PITASTNHTL…CVATFPGGHF (223 aa)) is the B30.2/SPRY 3 domain. One can recognise an SAM domain in the interval 1734 to 1798 (WAPNDVAIWL…INRLNRMIQI (65 aa)). Residues 1862–2105 (KSYTQKEIED…PPPPPQLPVR (244 aa)) form a disordered region. Residues 1865-1874 (TQKEIEDRNR) show a composition bias toward basic and acidic residues. Low complexity predominate over residues 1951–1967 (SVSSTGGSSGFLTFPSS). A compositionally biased stretch (polar residues) spans 1989-2002 (ITSNYKGITNTGQP). A compositionally biased stretch (low complexity) spans 2020–2070 (SNNGNNGNNNNNNNNNNIKANQQQQQQSSYQQSQTQQQQQHITSTSTSTTN). Pro residues predominate over residues 2089–2102 (PSRPPPPPPPPPQL). The Protein kinase domain maps to 2115-2387 (LEFGQTIGKG…FKQIIVHLKE (273 aa)). Residues 2121-2129 (IGKGFFGEV) and Lys-2142 each bind ATP. Asp-2243 (proton acceptor) is an active-site residue.

This sequence belongs to the protein kinase superfamily. TKL Tyr protein kinase family. In terms of processing, tyrosine kinase domain is capable of autophosphorylation, in vitro; however it is also autophosphorylated on serine and threonine residues.

It carries out the reaction L-tyrosyl-[protein] + ATP = O-phospho-L-tyrosyl-[protein] + ADP + H(+). In terms of biological role, essential for spore differentiation. In Dictyostelium discoideum (Social amoeba), this protein is Dual specificity protein kinase splA (splA).